Reading from the N-terminus, the 525-residue chain is GMP synthase [glutamine-hydrolyzing] (525 aa).

Residues 9-207 (RILILDFGSQ…VLEICGCAAL (199 aa)) enclose the Glutamine amidotransferase type-1 domain. Cys86 (nucleophile) is an active-site residue. Residues His181 and Glu183 contribute to the active site. The GMPS ATP-PPase domain maps to 208–400 (WTPATIIEDA…LGLPYDMLYR (193 aa)). An ATP-binding site is contributed by 235-241 (SGGVDSS).

Homodimer.

It catalyses the reaction XMP + L-glutamine + ATP + H2O = GMP + L-glutamate + AMP + diphosphate + 2 H(+). It participates in purine metabolism; GMP biosynthesis; GMP from XMP (L-Gln route): step 1/1. Functionally, catalyzes the synthesis of GMP from XMP. The protein is GMP synthase [glutamine-hydrolyzing] of Edwardsiella ictaluri (strain 93-146).